Consider the following 193-residue polypeptide: MFNNILKQVGDYAKESLQAAKYIGQGLAVTFDHMSRRPITVQYPYEKLIPSERFRGRIHFEFDKCIACEVCVRVCPINLPVVDWEFNKAVKKKELKHYSIDFGVCIFCGNCVEYCPTNCLSMTEEYELAAYDRHDLNYDNVALGRLPYKVTEDPMVTPLRELGYLPKGVIEPHNLPKGSQRAGQHPEDLVKAE.

2 4Fe-4S ferredoxin-type domains span residues 56-85 (GRIH…VDWE) and 96-125 (KHYS…MTEE). [4Fe-4S] cluster is bound by residues Cys-65, Cys-68, Cys-71, Cys-75, Cys-105, Cys-108, Cys-111, and Cys-115. The segment at 174–193 (NLPKGSQRAGQHPEDLVKAE) is disordered. Positions 184-193 (QHPEDLVKAE) are enriched in basic and acidic residues.

Belongs to the complex I 23 kDa subunit family. NDH-1 is composed of at least 11 different subunits. [4Fe-4S] cluster is required as a cofactor.

It is found in the cellular thylakoid membrane. It carries out the reaction a plastoquinone + NADH + (n+1) H(+)(in) = a plastoquinol + NAD(+) + n H(+)(out). The catalysed reaction is a plastoquinone + NADPH + (n+1) H(+)(in) = a plastoquinol + NADP(+) + n H(+)(out). Functionally, NDH-1 shuttles electrons from an unknown electron donor, via FMN and iron-sulfur (Fe-S) centers, to quinones in the respiratory and/or the photosynthetic chain. The immediate electron acceptor for the enzyme in this species is believed to be plastoquinone. Couples the redox reaction to proton translocation, and thus conserves the redox energy in a proton gradient. The chain is NAD(P)H-quinone oxidoreductase subunit I from Synechocystis sp. (strain ATCC 27184 / PCC 6803 / Kazusa).